A 413-amino-acid polypeptide reads, in one-letter code: FAD-dependent monooxygenase vrtH (413 aa).

Residues 1-23 form the signal peptide; that stretch reads MQRANHTRPVLIIGAGLSGLAIG. A glycan (N-linked (GlcNAc...) asparagine) is linked at Asn5. FAD is bound by residues Glu37 and Ala48. A glycan (N-linked (GlcNAc...) asparagine) is linked at Asn94. FAD is bound at residue Arg120. An N-linked (GlcNAc...) asparagine glycan is attached at Asn232. FAD is bound by residues Asp327 and Gly340.

The protein belongs to the paxM FAD-dependent monooxygenase family. FAD is required as a cofactor.

Its pathway is secondary metabolite biosynthesis; terpenoid biosynthesis. In terms of biological role, FAD-dependent monooxygenase; part of the gene cluster that mediates the biosynthesis of viridicatumtoxin, a tetracycline-like fungal meroterpenoid with a unique, fused spirobicyclic ring system. The first step of the pathway is the production of the malonamoyl-CoA starter unit for the polyketide synthase vrtA. The aldolase vrtJ may be involved in the synthesis of the malonamate substrate for malonamoyl-CoA synthetase vrtB. The polyketide synthase vrtA then may utilize the malonamoyl-CoA starter unit, followed by sequential condensation of eight malonyl-CoA units to form the polyketide backbone. The cyclization of the last ring could be mediated by the lactamase-like protein vrtG. The proposed post-PKS tailoring steps are a hydroxylation at C5 catalyzed the cytochrome P450 monooxygenase vrtE, a hydroxylation at C12a catalyzed by VrtH and/or VrtI, and an O-methylation by the O-methyltransferase vrtF. VrtC is then proposed to catalyze the transfer of a geranyl group synthesized by vrtD to the aromatic C ring of the tetracyclic polyketide intermediate of viridicatumtoxin to yield previridicatumtoxin. Finally, the cytochrome P450 monooxygenase vrtK catalyzes the spirocyclization of the geranyl moiety of previridicatumtoxin to afford viridicatumtoxin. In Penicillium aethiopicum, this protein is FAD-dependent monooxygenase vrtH.